A 575-amino-acid chain; its full sequence is Hemagglutinin-neuraminidase (575 aa).

The Intravirion segment spans residues 1–34 (MAEKGKTNSSYWSTTRNDNSTVNTYIDTPAGKTH). A helical transmembrane segment spans residues 35–55 (IWLLIATTMHTILSFIIMILC). At 56–575 (IDLIIKQDTC…SIPKICKITS (520 aa)) the chain is on the virion surface side. A glycan (N-linked (GlcNAc...) asparagine; by host) is linked at asparagine 77. 4 disulfide bridges follow: cysteine 192/cysteine 216, cysteine 258/cysteine 271, cysteine 357/cysteine 469, and cysteine 463/cysteine 473. Residues 254–259 (NRKSCS) form an involved in neuraminidase activity region. Asparagine 499 and asparagine 511 each carry an N-linked (GlcNAc...) asparagine; by host glycan. A disulfide bridge connects residues cysteine 535 and cysteine 544.

The protein belongs to the paramyxoviruses hemagglutinin-neuraminidase family. Homotetramer; composed of disulfide-linked homodimers. Interacts with F protein trimer.

Its subcellular location is the virion membrane. The protein localises to the host cell membrane. It carries out the reaction Hydrolysis of alpha-(2-&gt;3)-, alpha-(2-&gt;6)-, alpha-(2-&gt;8)- glycosidic linkages of terminal sialic acid residues in oligosaccharides, glycoproteins, glycolipids, colominic acid and synthetic substrates.. Attaches the virus to sialic acid-containing cell receptors and thereby initiating infection. Binding of HN protein to the receptor induces a conformational change that allows the F protein to trigger virion/cell membranes fusion. In terms of biological role, neuraminidase activity ensures the efficient spread of the virus by dissociating the mature virions from the neuraminic acid containing glycoproteins. This Human parainfluenza 1 virus (strain Washington/1957) (HPIV-1) protein is Hemagglutinin-neuraminidase (HN).